The sequence spans 250 residues: Anti-sigma-L factor RslA (250 aa).

The Cytoplasmic segment spans residues 1–115 (MTMPLRGLGP…VHRRRRRTRL (115 aa)). A helical transmembrane segment spans residues 116-136 (ITWVASSAAAAVLAIGVLVGV). The Extracellular segment spans residues 137–250 (QGHSAAPQRA…TGQVLLQRSL (114 aa)).

Interacts with ECF RNA polymerase sigma factor SigL; this should inhibit the interaction of SigL with the RNA polymerase catalytic core. In terms of processing, probably cleaved within the membrane by Rip1 near the cytoplasmic membrane interface.

Its subcellular location is the cell membrane. In terms of biological role, an anti-sigma factor for extracytoplasmic function (ECF) sigma factor SigL. ECF sigma factors are held in an inactive form by an anti-sigma factor until released by regulated intramembrane proteolysis (RIP). RIP occurs when an extracytoplasmic signal triggers a concerted proteolytic cascade to transmit information and elicit cellular responses. The membrane-spanning regulatory substrate protein is first cut extracytoplasmically (site-1 protease, S1P), then within the membrane itself (site-2 protease, S2P, Rip1), while cytoplasmic proteases finish degrading the regulatory protein, liberating the sigma factor. This is Anti-sigma-L factor RslA (rslA) from Mycobacterium tuberculosis (strain ATCC 35801 / TMC 107 / Erdman).